Here is a 183-residue protein sequence, read N- to C-terminus: Fetal and adult testis-expressed transcript protein (183 aa).

A disordered region spans residues 42 to 66 (SRSRGASQKKQKLEQKAAGSASAKR). The chain crosses the membrane as a helical span at residues 163 to 181 (TLIIAVLVSASIANLWLWM).

Interacts with BIK and RNF183. Interacts with IMMT/MIC60and EMD. As to expression, testis-specific in fetus (aged from 6 to 11 weeks). In adult, expressed predominantly in testis, with some expression in lung, heart, kidney, adrenal gland and whole brain. Highly expressed in certain types of cancer tissues such as hepatocellular carcinoma, colon and gastric cancer. Weakly expressed in normal pancreas.

The protein resides in the mitochondrion. It localises to the mitochondrion outer membrane. Its subcellular location is the endoplasmic reticulum membrane. In terms of biological role, involved in the regulation of endoplasmic reticulum (ER)-mitochondria coupling. Negatively regulates the ER-mitochondria distance and Ca(2+) transfer from ER to mitochondria possibly implicating it in the regulation of apoptosis. May collaborate with RNF183 to restrain BIK protein levels thus regulating apoptotic signaling. This chain is Fetal and adult testis-expressed transcript protein (FATE1), found in Homo sapiens (Human).